The sequence spans 240 residues: Bidirectional sugar transporter SWEET5 (240 aa).

Residues 1-9 (MTDPHTART) lie on the Extracellular side of the membrane. A helical transmembrane segment spans residues 10–30 (IVGIVGNVISFGLFCAPIPTM). The 86-residue stretch at 10–95 (IVGIVGNVIS…YVTIFFVFAT (86 aa)) folds into the MtN3/slv 1 domain. Topologically, residues 31-45 (VKIWKMKSVSEFKPD) are cytoplasmic. A helical transmembrane segment spans residues 46 to 66 (PYVATVLNCMMWTFYGLPFVQ). Residues 67-72 (PDSLLV) lie on the Extracellular side of the membrane. A helical transmembrane segment spans residues 73–93 (ITINGTGLFMELVYVTIFFVF). Over 94–103 (ATSPVRRKIT) the chain is Cytoplasmic. Residues 104-124 (IAMVIEVIFMAVVIFCTMYFL) form a helical membrane-spanning segment. The Extracellular portion of the chain corresponds to 125–131 (HTTKQRS). Residues 132–152 (MLIGILCIVFNVIMYAAPLTV) form a helical membrane-spanning segment. Residues 133–217 (LIGILCIVFN…IIYITYYKTT (85 aa)) form the MtN3/slv 2 domain. Over 153 to 165 (MKLVIKTKSVKYM) the chain is Cytoplasmic. The helical transmembrane segment at 166–186 (PFFLSLANFMNGVVWVIYACL) threads the bilayer. The Extracellular portion of the chain corresponds to 187 to 190 (KFDP). Residues 191 to 211 (YILIPNGLGSLSGIIQLIIYI) traverse the membrane as a helical segment. The Cytoplasmic segment spans residues 212–240 (TYYKTTNWNDDDEDKEKRYSNAGIELGQA).

This sequence belongs to the SWEET sugar transporter family. In terms of assembly, forms homooligomers and heterooligomers with SWEET6, SWEET8, SWEET9, SWEET11 and SWEET12.

The protein resides in the cell membrane. Mediates both low-affinity uptake and efflux of sugar across the plasma membrane. May play roles in nurturing the male gametophyte. The protein is Bidirectional sugar transporter SWEET5 of Arabidopsis thaliana (Mouse-ear cress).